The sequence spans 231 residues: Ferredoxin-type protein NapG (231 aa).

A signal peptide (tat-type signal) is located at residues 1–41 (MSRSAKPQNGRRRFLRDVVRTAGGLAAVGVALGLQQQTARA). 4 consecutive 4Fe-4S ferredoxin-type domains span residues 50–81 (GAINENAFASACVRCGQCVQACPYDTLKLATL), 89–121 (TPYFVARDIPCEMCEDIPCAKVCPSGALDREIE), 130–166 (LAVLVDQENCLNFQGLRCDVCYRECPKIDEAITLELE), and 177–208 (FLPTVHSDACTGCGKCEKVCVLEQPAIKVLPL). The [4Fe-4S] cluster site is built by C61, C64, C67, C71, C99, C102, C107, C111, C139, C147, C150, C154, C186, C189, C192, and C196.

[4Fe-4S] cluster is required as a cofactor. Post-translationally, exported by the Tat system. The position of the signal peptide cleavage has not been experimentally proven.

It is found in the periplasm. Functionally, required for electron transfer from ubiquinol, via NapC, to the periplasmic nitrate reductase NapAB complex. This Escherichia coli (strain K12) protein is Ferredoxin-type protein NapG (napG).